A 156-amino-acid polypeptide reads, in one-letter code: NADH-ubiquinone oxidoreductase chain 6 (156 aa).

Transmembrane regions (helical) follow at residues 1 to 21 (MILT…YLAS), 24 to 44 (IVLG…FASF), 49 to 69 (FAFL…AYFL), 77 to 97 (ISNF…SALT), and 121 to 141 (STAP…VIVV).

It belongs to the complex I subunit 6 family.

The protein localises to the mitochondrion membrane. It carries out the reaction a ubiquinone + NADH + 5 H(+)(in) = a ubiquinol + NAD(+) + 4 H(+)(out). In terms of biological role, core subunit of the mitochondrial membrane respiratory chain NADH dehydrogenase (Complex I) that is believed to belong to the minimal assembly required for catalysis. Complex I functions in the transfer of electrons from NADH to the respiratory chain. The immediate electron acceptor for the enzyme is believed to be ubiquinone. This chain is NADH-ubiquinone oxidoreductase chain 6 (ND6), found in Lumbricus terrestris (Common earthworm).